Reading from the N-terminus, the 220-residue chain is Germin-like protein subfamily T member 2 (220 aa).

An N-terminal signal peptide occupies residues 1-27 (MTTLQISSSLFRSFLLVICVFVIPSLS). An intrachain disulfide couples C37 to C52. The Cupin type-1 domain maps to 64-212 (SGLGGPLNTS…TFRTDDVTVN (149 aa)). N-linked (GlcNAc...) asparagine glycosylation occurs at N71. The Mn(2+) site is built by H112, H114, and E119. The N-linked (GlcNAc...) asparagine glycan is linked to N136. H158 lines the Mn(2+) pocket.

It belongs to the germin family. Oligomer (believed to be a pentamer but probably hexamer).

It is found in the secreted. It localises to the extracellular space. The protein resides in the apoplast. Functionally, may play a role in plant defense. Probably has no oxalate oxidase activity even if the active site is conserved. The polypeptide is Germin-like protein subfamily T member 2 (Arabidopsis thaliana (Mouse-ear cress)).